A 157-amino-acid polypeptide reads, in one-letter code: Transcription elongation factor GreA (157 aa).

The stretch at 46 to 67 (AEYHAARERQSFIEGRIKELED) forms a coiled coil.

It belongs to the GreA/GreB family.

Its function is as follows. Necessary for efficient RNA polymerase transcription elongation past template-encoded arresting sites. The arresting sites in DNA have the property of trapping a certain fraction of elongating RNA polymerases that pass through, resulting in locked ternary complexes. Cleavage of the nascent transcript by cleavage factors such as GreA or GreB allows the resumption of elongation from the new 3'terminus. GreA releases sequences of 2 to 3 nucleotides. In Rhodospirillum rubrum (strain ATCC 11170 / ATH 1.1.1 / DSM 467 / LMG 4362 / NCIMB 8255 / S1), this protein is Transcription elongation factor GreA.